Reading from the N-terminus, the 161-residue chain is uncharacterized protein (161 aa).

The protein to R.leguminosarum PsiB.

This is an uncharacterized protein from Sinorhizobium fredii (strain NBRC 101917 / NGR234).